Consider the following 210-residue polypeptide: Holliday junction branch migration complex subunit RuvA (210 aa).

The domain I stretch occupies residues methionine 1–alanine 70. The tract at residues threonine 71 to leucine 149 is domain II. The segment at proline 150–valine 160 is flexible linker. The interval valine 160–glutamine 210 is domain III.

It belongs to the RuvA family. As to quaternary structure, homotetramer. Forms an RuvA(8)-RuvB(12)-Holliday junction (HJ) complex. HJ DNA is sandwiched between 2 RuvA tetramers; dsDNA enters through RuvA and exits via RuvB. An RuvB hexamer assembles on each DNA strand where it exits the tetramer. Each RuvB hexamer is contacted by two RuvA subunits (via domain III) on 2 adjacent RuvB subunits; this complex drives branch migration. In the full resolvosome a probable DNA-RuvA(4)-RuvB(12)-RuvC(2) complex forms which resolves the HJ.

It localises to the cytoplasm. Functionally, the RuvA-RuvB-RuvC complex processes Holliday junction (HJ) DNA during genetic recombination and DNA repair, while the RuvA-RuvB complex plays an important role in the rescue of blocked DNA replication forks via replication fork reversal (RFR). RuvA specifically binds to HJ cruciform DNA, conferring on it an open structure. The RuvB hexamer acts as an ATP-dependent pump, pulling dsDNA into and through the RuvAB complex. HJ branch migration allows RuvC to scan DNA until it finds its consensus sequence, where it cleaves and resolves the cruciform DNA. This is Holliday junction branch migration complex subunit RuvA from Rippkaea orientalis (strain PCC 8801 / RF-1) (Cyanothece sp. (strain PCC 8801)).